Consider the following 738-residue polypeptide: Envelope glycoprotein gp160 (738 aa).

The N-terminal stretch at 1-21 is a signal peptide; it reads MCGKSLLCVASLLASAYLVYC. At 22–670 the chain is on the extracellular side; that stretch reads TQYVTVFYGV…LTSWIKYIQY (649 aa). The N-linked (GlcNAc...) asparagine; by host glycan is linked to Asn36. The cysteines at positions 43 and 56 are disulfide-linked. Asn69, Asn113, Asn117, Asn118, Asn132, Asn141, Asn169, Asn182, Asn197, Asn229, Asn232, Asn263, Asn269, Asn280, Asn291, Asn301, Asn356, Asn362, Asn389, Asn402, Asn439, Asn454, and Asn457 each carry an N-linked (GlcNAc...) asparagine; by host glycan. Intrachain disulfides connect Cys100-Cys205, Cys107-Cys196, Cys112-Cys153, Cys218-Cys248, and Cys228-Cys240. The interval 112 to 152 is V1; that stretch reads CNSTTNNTTTTGSTTGMSEINETSPSYSDNCTGLGKEEIVN. The segment at 153-196 is V2; sequence CQFYMTGLERDKKKQYNETWYSKDVVCESNNTKDGKNRCYMNHC. Residues 296-328 are V3; that stretch reads CKRPGNKTVVPITLMSGLVFHSQPINTRPRQAW. A disulfide bridge links Cys296 with Cys329. Intrachain disulfides connect Cys381–Cys438 and Cys388–Cys411. The V4 stretch occupies residues 388–411; it reads CNMTWFLNWVENRPNQTQHNYAPC. A V5 region spans residues 454 to 460; the sequence is NQTNITF. A fusion peptide region spans residues 503–523; sequence GVFVLGFLGFLATAGSAMGAA. Residues 566 to 582 are immunosuppression; that stretch reads LQARVTAIEKYLKDQAQ. N-linked (GlcNAc...) asparagine; by host glycans are attached at residues Asn602, Asn611, and Asn627. A coiled-coil region spans residues 615–636; the sequence is QEWEKQVRYLEANISQSLEQAQ. Residues 648-669 are MPER; binding to GalCer; sequence KLNSWDVFGNWFDLTSWIKYIQ. The chain crosses the membrane as a helical span at residues 671 to 691; that stretch reads GVYIVVGVIVLRIAIYIVQLL. Topologically, residues 692 to 738 are cytoplasmic; that stretch reads SRLRKGYRPVFSSPPGYLQQIHIHTDRGQPANEGTEEDDRDDDGYDL. A YXXV motif; contains endocytosis signal motif is present at residues 698–701; that stretch reads YRPV. Residues 716-738 form a disordered region; the sequence is TDRGQPANEGTEEDDRDDDGYDL. Over residues 725–738 the composition is skewed to acidic residues; sequence GTEEDDRDDDGYDL.

As to quaternary structure, the mature envelope protein (Env) consists of a homotrimer of non-covalently associated gp120-gp41 heterodimers. The resulting complex protrudes from the virus surface as a spike. There seems to be as few as 10 spikes on the average virion. Interacts with human CD4, CCR5 and CXCR4, to form a P4HB/PDI-CD4-CXCR4-gp120 complex. Gp120 also interacts with the C-type lectins CD209/DC-SIGN and CLEC4M/DC-SIGNR (collectively referred to as DC-SIGN(R)). Gp120 and gp41 interact with GalCer. In terms of assembly, the mature envelope protein (Env) consists of a homotrimer of non-covalently associated gp120-gp41 heterodimers. The resulting complex protrudes from the virus surface as a spike. There seems to be as few as 10 spikes on the average virion. Post-translationally, specific enzymatic cleavages in vivo yield mature proteins. Envelope glycoproteins are synthesized as an inactive precursor that is heavily N-glycosylated and processed likely by host cell furin in the Golgi to yield the mature SU and TM proteins. The cleavage site between SU and TM requires the minimal sequence [KR]-X-[KR]-R. In terms of processing, palmitoylation of the transmembrane protein and of Env polyprotein (prior to its proteolytic cleavage) is essential for their association with host cell membrane lipid rafts. Palmitoylation is therefore required for envelope trafficking to classical lipid rafts, but not for viral replication.

It localises to the virion membrane. It is found in the host cell membrane. Its subcellular location is the host endosome membrane. Functionally, the surface protein gp120 (SU) attaches the virus to the host lymphoid cell by binding to the primary receptor CD4. This interaction induces a structural rearrangement creating a high affinity binding site for a chemokine coreceptor like CXCR4 and/or CCR5. This peculiar 2 stage receptor-interaction strategy allows gp120 to maintain the highly conserved coreceptor-binding site in a cryptic conformation, protected from neutralizing antibodies. Since CD4 also displays a binding site for the disulfide-isomerase P4HB/PDI, a P4HB/PDI-CD4-CXCR4-gp120 complex may form. In that complex, P4HB/PDI could reach and reduce gp120 disulfide bonds, causing major conformational changes in gp120. TXN, another PDI family member could also be involved in disulfide rearrangements in Env during fusion. These changes are transmitted to the transmembrane protein gp41 and are thought to activate its fusogenic potential by unmasking its fusion peptide. The surface protein gp120 is a ligand for CD209/DC-SIGN and CLEC4M/DC-SIGNR, which are respectively found on dendritic cells (DCs), and on endothelial cells of liver sinusoids and lymph node sinuses. These interactions allow capture of viral particles at mucosal surfaces by these cells and subsequent transmission to permissive cells. DCs are professional antigen presenting cells, critical for host immunity by inducing specific immune responses against a broad variety of pathogens. They act as sentinels in various tissues where they take up antigen, process it, and present it to T-cells following migration to lymphoid organs. HIV subverts the migration properties of dendritic cells to gain access to CD4+ T-cells in lymph nodes. Virus transmission to permissive T-cells occurs either in trans (without DCs infection, through viral capture and transmission), or in cis (following DCs productive infection, through the usual CD4-gp120 interaction), thereby inducing a robust infection. In trans infection, bound virions remain infectious over days and it is proposed that they are not degraded, but protected in non-lysosomal acidic organelles within the DCs close to the cell membrane thus contributing to the viral infectious potential during DCs' migration from the periphery to the lymphoid tissues. On arrival at lymphoid tissues, intact virions recycle back to DCs' cell surface allowing virus transmission to CD4+ T-cells. Virion capture also seems to lead to MHC-II-restricted viral antigen presentation, and probably to the activation of HIV-specific CD4+ cells. Its function is as follows. The transmembrane protein gp41 (TM) acts as a class I viral fusion protein. Under the current model, the protein has at least 3 conformational states: pre-fusion native state, pre-hairpin intermediate state, and post-fusion hairpin state. During fusion of viral and target intracellular membranes, the coiled coil regions (heptad repeats) assume a trimer-of-hairpins structure, positioning the fusion peptide in close proximity to the C-terminal region of the ectodomain. The formation of this structure appears to drive apposition and subsequent fusion of viral and target cell membranes. Complete fusion occurs in host cell endosomes and is dynamin-dependent, however some lipid transfer might occur at the plasma membrane. The virus undergoes clathrin-dependent internalization long before endosomal fusion, thus minimizing the surface exposure of conserved viral epitopes during fusion and reducing the efficacy of inhibitors targeting these epitopes. Membranes fusion leads to delivery of the nucleocapsid into the cytoplasm. In terms of biological role, the envelope glycoprotein gp160 precursor down-modulates cell surface CD4 antigen by interacting with it in the endoplasmic reticulum and blocking its transport to the cell surface. Functionally, the gp120-gp41 heterodimer seems to contribute to T-cell depletion during HIV-1 infection. The envelope glycoproteins expressed on the surface of infected cells induce apoptosis through an interaction with uninfected cells expressing the receptor (CD4) and the coreceptors CXCR4 or CCR5. This type of bystander killing may be obtained by at least three distinct mechanisms. First, the interaction between the 2 cells can induce cellular fusion followed by nuclear fusion within the syncytium. Syncytia are condemned to die from apoptosis. Second, the 2 interacting cells may not fuse entirely and simply exchange plasma membrane lipids, after a sort of hemifusion process, followed by rapid death. Third, it is possible that virus-infected cells, on the point of undergoing apoptosis, fuse with CD4-expressing cells, in which case apoptosis is rapidly transmitted from one cell to the other and thus occurs in a sort of contagious fashion. The gp120-gp41 heterodimer allows rapid transcytosis of the virus through CD4 negative cells such as simple epithelial monolayers of the intestinal, rectal and endocervical epithelial barriers. Both gp120 and gp41 specifically recognize glycosphingolipids galactosyl-ceramide (GalCer) or 3' sulfo-galactosyl-ceramide (GalS) present in the lipid rafts structures of epithelial cells. Binding to these alternative receptors allows the rapid transcytosis of the virus through the epithelial cells. This transcytotic vesicle-mediated transport of virions from the apical side to the basolateral side of the epithelial cells does not involve infection of the cells themselves. The polypeptide is Envelope glycoprotein gp160 (env) (Human immunodeficiency virus type 2 subtype A (isolate Ghana-1) (HIV-2)).